Consider the following 283-residue polypeptide: DegV domain-containing protein lmo2514 (283 aa).

Residues 5 to 282 (IAVVTDSTTY…EGALGLTWSI (278 aa)) enclose the DegV domain. Hexadecanoate-binding residues include Ser-63 and Ser-96.

Functionally, may bind long-chain fatty acids, such as palmitate, and may play a role in lipid transport or fatty acid metabolism. The sequence is that of DegV domain-containing protein lmo2514 from Listeria monocytogenes serovar 1/2a (strain ATCC BAA-679 / EGD-e).